A 212-amino-acid chain; its full sequence is Peptide methionine sulfoxide reductase MsrA (212 aa).

Residue C52 is part of the active site.

Belongs to the MsrA Met sulfoxide reductase family.

The enzyme catalyses L-methionyl-[protein] + [thioredoxin]-disulfide + H2O = L-methionyl-(S)-S-oxide-[protein] + [thioredoxin]-dithiol. It catalyses the reaction [thioredoxin]-disulfide + L-methionine + H2O = L-methionine (S)-S-oxide + [thioredoxin]-dithiol. Its function is as follows. Has an important function as a repair enzyme for proteins that have been inactivated by oxidation. Catalyzes the reversible oxidation-reduction of methionine sulfoxide in proteins to methionine. This chain is Peptide methionine sulfoxide reductase MsrA, found in Salmonella arizonae (strain ATCC BAA-731 / CDC346-86 / RSK2980).